A 252-amino-acid chain; its full sequence is Glucosamine-6-phosphate deaminase (252 aa).

The active-site Proton acceptor; for enolization step is Asp-64. Residue Asn-130 is the For ring-opening step of the active site. Catalysis depends on His-132, which acts as the Proton acceptor; for ring-opening step. Glu-137 serves as the catalytic For ring-opening step.

It belongs to the glucosamine/galactosamine-6-phosphate isomerase family. NagB subfamily.

The enzyme catalyses alpha-D-glucosamine 6-phosphate + H2O = beta-D-fructose 6-phosphate + NH4(+). It functions in the pathway amino-sugar metabolism; N-acetylneuraminate degradation; D-fructose 6-phosphate from N-acetylneuraminate: step 5/5. Functionally, catalyzes the reversible isomerization-deamination of glucosamine 6-phosphate (GlcN6P) to form fructose 6-phosphate (Fru6P) and ammonium ion. This chain is Glucosamine-6-phosphate deaminase, found in Exiguobacterium sibiricum (strain DSM 17290 / CCUG 55495 / CIP 109462 / JCM 13490 / 255-15).